Reading from the N-terminus, the 213-residue chain is Transcription antitermination protein NusB (213 aa).

This sequence belongs to the NusB family.

Involved in transcription antitermination. Required for transcription of ribosomal RNA (rRNA) genes. Binds specifically to the boxA antiterminator sequence of the ribosomal RNA (rrn) operons. In Nostoc punctiforme (strain ATCC 29133 / PCC 73102), this protein is Transcription antitermination protein NusB.